Reading from the N-terminus, the 682-residue chain is Amphiphysin (682 aa).

Coiled-coil stretches lie at residues 10–84 and 144–191; these read AKNV…LHEV and DYDS…QEEL. A BAR domain is found at 24–240; that stretch reads VLQKLGKADE…MTKLGDQHAD (217 aa). 4 disordered regions span residues 244–310, 446–470, 501–530, and 561–606; these read TIQG…PKLT, ILAEPDEPTEQAAESIEAGDKETTG, GAVRTEQEAAAEGDKPQGEEKDVDVSQEKV, and AAAE…ASDM. The span at 261–274 shows a compositional bias: pro residues; it reads PSPPEEVSPLPSPT. Positions 503–527 are enriched in basic and acidic residues; it reads VRTEQEAAAEGDKPQGEEKDVDVSQ. A compositionally biased stretch (polar residues) spans 567-596; the sequence is TQGTDSETSQIGSEQKATEEIQTTPSQDQP. The 74-residue stretch at 609–682 folds into the SH3 domain; the sequence is GFLFKVEVLH…FPENFTRHLE (74 aa).

In terms of assembly, heterodimer with BIN1. Binds SH3GLB1. Is abundant in the forebrain and cerebellum. It is also found in the adrenal gland, anterior and posterior pituitary.

It is found in the cytoplasmic vesicle. Its subcellular location is the secretory vesicle. The protein resides in the synaptic vesicle membrane. The protein localises to the cytoplasm. It localises to the cytoskeleton. Its function is as follows. May participate in mechanisms of regulated exocytosis in synapses and certain endocrine cell types. May control the properties of the membrane associated cytoskeleton. The protein is Amphiphysin (AMPH) of Gallus gallus (Chicken).